We begin with the raw amino-acid sequence, 453 residues long: o-phthalyl amidase (453 aa).

In terms of assembly, monomer. In terms of processing, the N-terminus is blocked.

The enzyme catalyses a phtalamide + H2O = phthalate + a primary amine. Its activity is regulated as follows. Inhibited by iodoacetate, p-hydroxymercuric benzoate and copper ions. Functionally, catalyzes the removal of the phthalyl group from phthalyl amides generating phthalate and an amine. The enzyme has a broad substrate specificity and hydrolyzes phthalylated amino acids, peptides, beta-lactams, aromatic and aliphatic amines; substitutions allowed on the phthalyl group include 6-F, 6-NH(2), 3-OH, and a nitrogen in the aromatic ring ortho to the carboxy group attached to the amine. This chain is o-phthalyl amidase, found in Xanthobacter agilis.